Reading from the N-terminus, the 633-residue chain is Chaperone protein HtpG (633 aa).

An a; substrate-binding region spans residues 1-345; that stretch reads MSADTQSETL…SDDLPLNISR (345 aa). A b region spans residues 346-562; the sequence is EMLQHNPMIS…EYDFGMGMQR (217 aa). Residues 563 to 633 are c; that stretch reads LLQAAGHQLP…VRRVNNLLAG (71 aa).

The protein belongs to the heat shock protein 90 family. Homodimer.

It is found in the cytoplasm. Molecular chaperone. Has ATPase activity. This Halorhodospira halophila (strain DSM 244 / SL1) (Ectothiorhodospira halophila (strain DSM 244 / SL1)) protein is Chaperone protein HtpG.